A 102-amino-acid polypeptide reads, in one-letter code: Nuclear protein 2 (102 aa).

Disordered regions lie at residues 1-26 and 46-102; these read MDPP…ALPT and PASG…TRLA. Over residues 85-102 the composition is skewed to basic residues; the sequence is QRKRRQRQLQPRPRTRLA.

The protein belongs to the NUPR family.

The protein localises to the nucleus. In terms of biological role, acts as a transcriptional repressor by inhibiting gene expression at the NUPR1 promoter in a p53/TP53-dependent manner in cancer cells. Involved in the G1 cell cycle arrest, and in a decrease in cell viability and cell proliferation of pancreatic cancer cells. Plays a role as a negative regulator of the protumoral factor NUPR1. In Mus musculus (Mouse), this protein is Nuclear protein 2.